We begin with the raw amino-acid sequence, 208 residues long: Thymidylate kinase (208 aa).

11–18 contacts ATP; it reads GIEGAGKT.

The protein belongs to the thymidylate kinase family.

It carries out the reaction dTMP + ATP = dTDP + ADP. Its function is as follows. Phosphorylation of dTMP to form dTDP in both de novo and salvage pathways of dTTP synthesis. The polypeptide is Thymidylate kinase (Hahella chejuensis (strain KCTC 2396)).